The following is a 142-amino-acid chain: Ribosome maturation factor RimP (142 aa).

This sequence belongs to the RimP family.

It localises to the cytoplasm. Functionally, required for maturation of 30S ribosomal subunits. The polypeptide is Ribosome maturation factor RimP (Nitrosospira multiformis (strain ATCC 25196 / NCIMB 11849 / C 71)).